A 528-amino-acid chain; its full sequence is Homoserine O-acetyltransferase (528 aa).

The AB hydrolase-1 domain occupies leucine 60 to aspartate 245. The Nucleophile role is filled by serine 154. Disordered regions lie at residues arginine 250–glutamine 335 and aspartate 388–glutamate 413. Residues glutamine 273–serine 282 are compositionally biased toward polar residues. The span at alanine 295–arginine 304 shows a compositional bias: basic and acidic residues. The segment covering leucine 389–proline 409 has biased composition (low complexity). Residues aspartate 438 and histidine 467 contribute to the active site.

The protein belongs to the AB hydrolase superfamily. MetX family.

It is found in the cytoplasm. It catalyses the reaction L-homoserine + acetyl-CoA = O-acetyl-L-homoserine + CoA. The protein operates within amino-acid biosynthesis; L-methionine biosynthesis via de novo pathway; O-acetyl-L-homoserine from L-homoserine: step 1/1. Inhibited by 6-carbamoyl-3a,4,5,9b-tetrahydro-3H-cyclopenta[ c]quinoline-4-carboxylic acid (CTCQC). Its function is as follows. Commits homoserine to the methionine biosynthesis pathway by catalyzing its O-acetylation. This chain is Homoserine O-acetyltransferase, found in Cryptococcus neoformans var. grubii serotype A (strain H99 / ATCC 208821 / CBS 10515 / FGSC 9487) (Filobasidiella neoformans var. grubii).